We begin with the raw amino-acid sequence, 165 residues long: uncharacterized protein (165 aa).

The first 17 residues, 1-17 (MIRGFFLILLFLLLAFF), serve as a signal peptide directing secretion.

This is an uncharacterized protein from Aquifex aeolicus (strain VF5).